Consider the following 139-residue polypeptide: D-ribose pyranase (139 aa).

His-20 (proton donor) is an active-site residue. Substrate is bound by residues Asp-28, His-106, and 128-130 (YAN).

This sequence belongs to the RbsD / FucU family. RbsD subfamily. In terms of assembly, homodecamer.

It localises to the cytoplasm. It catalyses the reaction beta-D-ribopyranose = beta-D-ribofuranose. It participates in carbohydrate metabolism; D-ribose degradation; D-ribose 5-phosphate from beta-D-ribopyranose: step 1/2. Its function is as follows. Catalyzes the interconversion of beta-pyran and beta-furan forms of D-ribose. This is D-ribose pyranase from Citrobacter koseri (strain ATCC BAA-895 / CDC 4225-83 / SGSC4696).